The primary structure comprises 284 residues: Nucleotide-binding protein NMA0948 (284 aa).

G8–S15 lines the ATP pocket. D58–S61 is a binding site for GTP.

The protein belongs to the RapZ-like family.

Displays ATPase and GTPase activities. The polypeptide is Nucleotide-binding protein NMA0948 (Neisseria meningitidis serogroup A / serotype 4A (strain DSM 15465 / Z2491)).